Reading from the N-terminus, the 367-residue chain is GTP cyclohydrolase FolE2 (367 aa).

This sequence belongs to the GTP cyclohydrolase IV family.

The catalysed reaction is GTP + H2O = 7,8-dihydroneopterin 3'-triphosphate + formate + H(+). The protein operates within cofactor biosynthesis; 7,8-dihydroneopterin triphosphate biosynthesis; 7,8-dihydroneopterin triphosphate from GTP: step 1/1. Functionally, converts GTP to 7,8-dihydroneopterin triphosphate. The chain is GTP cyclohydrolase FolE2 from Ruegeria sp. (strain TM1040) (Silicibacter sp.).